The following is a 405-amino-acid chain: Arrestin red cell isoform 2 (405 aa).

Belongs to the arrestin family.

The protein localises to the cytoplasm. The protein is Arrestin red cell isoform 2 of Oncorhynchus mykiss (Rainbow trout).